The sequence spans 336 residues: UPF0104 membrane protein MJ1595 (336 aa).

9 helical membrane-spanning segments follow: residues 9–29, 40–60, 68–88, 127–147, 154–174, 223–243, 245–265, 285–305, and 306–326; these read STIL…YIGL, NPEY…ILSA, ILGY…GLFI, VLDT…FVVT, YLIL…YLIA, WEVV…ILKL, LLFL…VYLI, VMIL…AVTL, and LDRL…MLII.

This sequence belongs to the UPF0104 family.

Its subcellular location is the cell membrane. This is UPF0104 membrane protein MJ1595 from Methanocaldococcus jannaschii (strain ATCC 43067 / DSM 2661 / JAL-1 / JCM 10045 / NBRC 100440) (Methanococcus jannaschii).